Consider the following 144-residue polypeptide: Small ribosomal subunit protein bS6 (144 aa).

The interval 95 to 144 (PVTTPSPMMQDDKSKPDENSRGTAAPTVNVADDSASGAQVVAAEENDTQS) is disordered. Positions 104 to 114 (QDDKSKPDENS) are enriched in basic and acidic residues.

It belongs to the bacterial ribosomal protein bS6 family.

Its function is as follows. Binds together with bS18 to 16S ribosomal RNA. This Nitrosomonas eutropha (strain DSM 101675 / C91 / Nm57) protein is Small ribosomal subunit protein bS6.